The following is an 87-amino-acid chain: Phosphoribosyl-ATP pyrophosphatase (87 aa).

It belongs to the PRA-PH family.

The protein resides in the cytoplasm. The catalysed reaction is 1-(5-phospho-beta-D-ribosyl)-ATP + H2O = 1-(5-phospho-beta-D-ribosyl)-5'-AMP + diphosphate + H(+). It participates in amino-acid biosynthesis; L-histidine biosynthesis; L-histidine from 5-phospho-alpha-D-ribose 1-diphosphate: step 2/9. This is Phosphoribosyl-ATP pyrophosphatase from Beutenbergia cavernae (strain ATCC BAA-8 / DSM 12333 / CCUG 43141 / JCM 11478 / NBRC 16432 / NCIMB 13614 / HKI 0122).